Reading from the N-terminus, the 203-residue chain is Non-specific lipid transfer protein GPI-anchored 20 (203 aa).

A signal peptide spans 1–21 (MSKIISLVVAMIAVLALPIRG). 4 disulfide bridges follow: Cys29-Cys74, Cys40-Cys58, Cys59-Cys99, and Cys72-Cys108. N-linked (GlcNAc...) asparagine glycosylation is found at Asn46, Asn50, and Asn88. Residues 119–182 (GPAATFGPSM…TSRPSETPSS (64 aa)) are disordered. Composition is skewed to polar residues over residues 144 to 156 (AAQTPQSDTTRPF) and 169 to 179 (DGGSTSRPSET). Ser172 is lipidated: GPI-anchor amidated serine. Residues 173-203 (TSRPSETPSSAYALSPSLLFFSIALVALKFY) constitute a propeptide, removed in mature form.

This sequence belongs to the plant LTP family. Expressed in seedlings, preferentially in hypocotyls and roots. Also observed in siliques and sepals.

Its subcellular location is the cell membrane. In terms of biological role, probable lipid transfer protein. The sequence is that of Non-specific lipid transfer protein GPI-anchored 20 from Arabidopsis thaliana (Mouse-ear cress).